A 427-amino-acid chain; its full sequence is Hydroxylamine reductase (427 aa).

Residues Cys-3, Cys-6, Cys-15, and Cys-21 each contribute to the [4Fe-4S] cluster site. The hybrid [4Fe-2O-2S] cluster site is built by His-129, Glu-153, Cys-197, Cys-283, Cys-311, Cys-336, Glu-370, and Lys-372. A Cysteine persulfide modification is found at Cys-283.

It belongs to the HCP family. Requires [4Fe-4S] cluster as cofactor. Hybrid [4Fe-2O-2S] cluster serves as cofactor.

Its subcellular location is the cytoplasm. It carries out the reaction A + NH4(+) + H2O = hydroxylamine + AH2 + H(+). Functionally, catalyzes the reduction of hydroxylamine to form NH(3) and H(2)O. In Methanothermobacter thermautotrophicus (strain ATCC 29096 / DSM 1053 / JCM 10044 / NBRC 100330 / Delta H) (Methanobacterium thermoautotrophicum), this protein is Hydroxylamine reductase.